The following is a 469-amino-acid chain: Keratin, type I cytoskeletal 16 (469 aa).

Residues 1–20 (MATCSRQFTSSSSMKGSCGI) form a disordered region. The tract at residues 1–112 (MATCSRQFTS…GIGDGLLVGS (112 aa)) is head. Residues 113 to 148 (EKVTMQNLNDRLATYLDKVRALEEANRDLEVKIRDW) form a coil 1A region. The IF rod domain occupies 113-424 (EKVTMQNLND…RLLDGENIHS (312 aa)). The linker 1 stretch occupies residues 149–166 (YQRQRPTEIKDYSPYFKT). Residues 167–258 (IEDLKSKIII…KNHEEEMLAL (92 aa)) are coil 1B. Residues 259–281 (RGQTGGDVNVEMDAAPGVDLSRI) form a linker 12 region. Positions 282-420 (LNEMRDQYEQ…ATYRRLLDGE (139 aa)) are coil 2. Positions 421–469 (NIHSSSQHSSGQSYSSREVFSSSSRQPRSILKEQGSTSFSQSQSQSSRD) are tail. The interval 422-469 (IHSSSQHSSGQSYSSREVFSSSSRQPRSILKEQGSTSFSQSQSQSSRD) is disordered. Composition is skewed to low complexity over residues 423 to 444 (HSSS…SSSS) and 454 to 469 (QGST…SSRD).

Belongs to the intermediate filament family. As to quaternary structure, heterodimer of a type I and a type II keratin. KRT16 associates with KRT6 isomers (KRT6A or KRT6B). Interacts with TCHP. Interacts with TRADD. Expressed in the epithelia of the tongue, upper and lower palate, footpad, proximal nail fold and nail bed, penile spine, sweat gland ducts, and back epidermis (at protein level). Expressed in upper suprabasal layers of the corneal epithelium (at protein level). Expressed in internal stratified epithelia in the esophagus and vagina (at protein level). Expressed in transitional stratified squamous epithelia in the forestomach, anal canal, and nasal cavity (at protein level). Expressed in transitional epithelia of the ureter, bladder and urethra (at protein level). In mature hair follicles, expressed in the companion layer of the outer root sheath during anagen and in the club hair sheath during catagen and telogen (at protein level).

Epidermis-specific type I keratin that plays a key role in skin. Acts as a regulator of innate immunity in response to skin barrier breach: required for some inflammatory checkpoint for the skin barrier maintenance. The chain is Keratin, type I cytoskeletal 16 (Krt16) from Mus musculus (Mouse).